The primary structure comprises 388 residues: Na(+)/H(+) antiporter NhaA (388 aa).

Over 1-11 (MKHLHRFFSSD) the chain is Cytoplasmic. Residues 12–31 (ASGGIILIIAAILAMIMANS) traverse the membrane as a helical segment. Residues 32 to 58 (GATSGWYHDFLETPVQLRVGSLEINKN) lie on the Periplasmic side of the membrane. A helical transmembrane segment spans residues 59–80 (MLLWINDALMAVFFLLVGLEVK). The Cytoplasmic portion of the chain corresponds to 81 to 96 (RELMQGSLASLLQAAF). Residues 97–116 (PVIAAIGGMIVPALLYLAFN) form a helical membrane-spanning segment. The Periplasmic portion of the chain corresponds to 117-122 (YADPIT). The helical transmembrane segment at 123 to 130 (REGWAIPA) threads the bilayer. At 131–154 (ATDIAFALGVLALLGSRVPLVLKI) the chain is on the cytoplasmic side. The chain crosses the membrane as a helical span at residues 155-176 (FLMALAIIDDLGAIIIIALFYT). Residues 177 to 180 (NDLS) are Periplasmic-facing. Residues 181-200 (MASLGVAAVAIAVLAVLNLC) form a helical membrane-spanning segment. The Cytoplasmic segment spans residues 201-204 (GVRR). The helical transmembrane segment at 205-222 (TGVYILVGVVLWTAVLKS) threads the bilayer. A topological domain (periplasmic) is located at residue glycine 223. Residues 224–236 (VHATLAGVIVGFF) form a helical membrane-spanning segment. Residues 237–253 (IPLKEKHGRSPAKRLEH) lie on the Cytoplasmic side of the membrane. The helical transmembrane segment at 254–272 (VLHPWVAYLILPLFAFANA) threads the bilayer. Topologically, residues 273–286 (GVSLQGVTLDGLTS) are periplasmic. A helical transmembrane segment spans residues 287-310 (ILPLGIIAGLLIGKPLGISLFCWL). Topologically, residues 311–339 (ALRLKLAHLPEGTTYQQIMVVGILCGIGF) are cytoplasmic. A helical transmembrane segment spans residues 340 to 350 (TMSIFIASLAF). Topologically, residues 351-357 (GSVDPEL) are periplasmic. A helical transmembrane segment spans residues 358 to 380 (INWAKLGILVGSISSAVIGYSWL). Topologically, residues 381–388 (RVRLRPSV) are cytoplasmic.

The protein belongs to the NhaA Na(+)/H(+) (TC 2.A.33) antiporter family.

Its subcellular location is the cell inner membrane. It carries out the reaction Na(+)(in) + 2 H(+)(out) = Na(+)(out) + 2 H(+)(in). Functionally, na(+)/H(+) antiporter that extrudes sodium in exchange for external protons. This is Na(+)/H(+) antiporter NhaA from Shigella flexneri serotype 5b (strain 8401).